We begin with the raw amino-acid sequence, 280 residues long: Vitamin B12-binding protein (280 aa).

The first 27 residues, 1 to 27 (MMPLGLFPLPRAAVVLLISLLTLPAQA), serve as a signal peptide directing secretion. The 248-residue stretch at 30–277 (RVISLSPSTT…QMASIPTPVA (248 aa)) folds into the Fe/B12 periplasmic-binding domain. Y57 provides a ligand contact to cyanocob(III)alamin. A disulfide bridge links C190 with C266.

This sequence belongs to the BtuF family. In terms of assembly, the complex is composed of two ATP-binding proteins (BtuD), two transmembrane proteins (BtuC) and a solute-binding protein (BtuF).

It localises to the periplasm. Part of the ABC transporter complex BtuCDF involved in vitamin B12 import. Binds vitamin B12 and delivers it to the periplasmic surface of BtuC. This chain is Vitamin B12-binding protein, found in Yersinia pseudotuberculosis serotype O:1b (strain IP 31758).